A 457-amino-acid polypeptide reads, in one-letter code: Multidrug resistance protein MdtK (457 aa).

Residues 1 to 10 (MQKYISEARL) lie on the Cytoplasmic side of the membrane. A helical membrane pass occupies residues 11–31 (LLALAIPVILAQIAQTAMGFV). Over 32–52 (DTVMAGGYSATDMAAVAIGTS) the chain is Periplasmic. Residues 53-73 (IWLPAILFGHGLLLALTPVIA) form a helical membrane-spanning segment. Topologically, residues 74–92 (QLNGSGRRERIAHQVRQGF) are cytoplasmic. Residues 93–113 (WLAGFVSVLIMLVLWNAGYII) traverse the membrane as a helical segment. The Periplasmic segment spans residues 114–126 (RYMENIDPALADK). Residues 127–147 (AVGYLRALLWGAPGYLFFQVA) form a helical membrane-spanning segment. Residues 148–159 (RNQCEGLAKAKP) are Cytoplasmic-facing. The helical transmembrane segment at 160-180 (GMVMGFIGLLVNIPVNYIFIY) threads the bilayer. Residues 181–188 (GHFGMPEL) are Periplasmic-facing. Residues 189–209 (GGVGCGVATAAVYWVMFLAMV) form a helical membrane-spanning segment. Topologically, residues 210–242 (SYIKRARSMRDIRNEKGTAKPEPAVMKRLIQLG) are cytoplasmic. The chain crosses the membrane as a helical span at residues 243 to 263 (LPIALALFLEVTLFAVVALLV). Over 264–275 (SPLGIVDVAGHQ) the chain is Periplasmic. The chain crosses the membrane as a helical span at residues 276-296 (IALNFSSLMFVLPMSLAAAVT). Residues 297-313 (IRVGYRLGQGSTLDAQT) are Cytoplasmic-facing. A helical transmembrane segment spans residues 314-334 (AARTGLMVGVCMATLTAIFTV). Residues 335-349 (SLREQIALLYNDNPE) lie on the Periplasmic side of the membrane. A helical membrane pass occupies residues 350 to 370 (VVTLAAHLMLLAAVYQISDSI). Residues 371-386 (QVIGSGILRGYKDTRS) are Cytoplasmic-facing. A helical membrane pass occupies residues 387–407 (IFYITFTAYWVLGLPSGYILA). Residues 408-417 (LTDLVVEPMG) are Periplasmic-facing. The chain crosses the membrane as a helical span at residues 418-438 (PAGFWIGFIIGLTSAAIMMML). Topologically, residues 439–457 (RMRFLQRMPSAIILQRASR) are cytoplasmic.

Belongs to the multi antimicrobial extrusion (MATE) (TC 2.A.66.1) family. MdtK subfamily.

The protein resides in the cell inner membrane. Functionally, multidrug efflux pump that functions probably as a Na(+)/drug antiporter. This Shigella flexneri serotype 5b (strain 8401) protein is Multidrug resistance protein MdtK.